The sequence spans 469 residues: Glutamate--tRNA ligase 1 (469 aa).

The short motif at 10–20 is the 'HIGH' region element; the sequence is PSPTGYLHIGG. Zn(2+) is bound by residues C99, C101, C126, and D128. The 'KMSKS' region motif lies at 237–241; it reads RLSKR. K240 provides a ligand contact to ATP.

It belongs to the class-I aminoacyl-tRNA synthetase family. Glutamate--tRNA ligase type 1 subfamily. As to quaternary structure, monomer. Zn(2+) is required as a cofactor.

The protein resides in the cytoplasm. The catalysed reaction is tRNA(Glu) + L-glutamate + ATP = L-glutamyl-tRNA(Glu) + AMP + diphosphate. Catalyzes the attachment of glutamate to tRNA(Glu) in a two-step reaction: glutamate is first activated by ATP to form Glu-AMP and then transferred to the acceptor end of tRNA(Glu). This chain is Glutamate--tRNA ligase 1, found in Coxiella burnetii (strain RSA 331 / Henzerling II).